A 792-amino-acid chain; its full sequence is Carboxysome assembly protein CsoS2 (792 aa).

The span at 1-15 (MAKQSSRELALERRK) shows a compositional bias: basic and acidic residues. Residues 1–235 (MAKQSSRELA…EISQRVRELR (235 aa)) are N-terminal domain. Disordered stretches follow at residues 1–259 (MAKQ…RNGS), 280–299 (QVVT…NEAS), and 338–359 (HGNR…DEPG). The N-repeat 1 repeat unit spans residues 7-22 (RELALERRKALSNSGK). 2 stretches are compositionally biased toward polar residues: residues 17 to 36 (LSNS…NRIR) and 69 to 82 (DTSF…SGAS). Residues 94 to 109 (RELVLARRDELSRRGQ) form an N-repeat 2 repeat. Basic and acidic residues-rich tracts occupy residues 97–106 (VLARRDELSR) and 113–126 (KSKD…EKIS). Polar residues predominate over residues 161-175 (DTVSRLSSRNSTSRP). N-repeat repeat units lie at residues 187 to 202 (RALV…KHGK) and 225 to 240 (REIS…KSGA). A compositionally biased stretch (basic and acidic residues) spans 218–236 (GDPDLSSREISQRVRELRS). Residues 240–615 (ATGKKRSGAC…VQACGSDAPA (376 aa)) form a middle region region. M-repeat repeat units follow at residues 270–319 (KVGL…DTFC), 330–379 (KVAV…NQYC), 388–427 (KVGQ…GDQY), 441–490 (KVGS…NTFC), 500–549 (KVGL…SGWC), and 560–609 (RTPK…VQAC). 2 disordered regions span residues 608–662 (ACGS…GSQI) and 687–792 (HFKS…GARG). Residues 616–792 (GSNDHQGSSE…LITVSGGARG (177 aa)) form a C-terminal domain region. Polar residues-rich tracts occupy residues 618 to 636 (NDHQ…SVQS) and 651 to 662 (VTGTSYEQGSQI). 2 C-repeat repeats span residues 633–678 (SVQS…GTEQ) and 703–738 (TRPE…EGAS). A C-terminal peptide (CTP) region spans residues 763-792 (EVSQPMSRVTGSSGNTDQGSLITVSGGARG). The segment covering 764–785 (VSQPMSRVTGSSGNTDQGSLIT) has biased composition (polar residues).

The protein belongs to the CsoS2 family. Probably interacts with the carboxysome major shell protein CsoS1 via the N-terminal domain; this complex probably also interacts with RuBisCO. Has been suggested to undergo ribosomal frameshifting, as does its ortholog in H.neapolitanus. The exact position of the putative frameshift is not given, but it would probably occur in the sixth M-repeat and remove the C-terminus.

It localises to the carboxysome. In terms of biological role, required for alpha-carboxysome (Cb) assembly, mediates interaction between RuBisCO and the Cb shell. The protein is probably intrinsically disordered. The C-terminal repeats act as the encapsulation signal to target proteins to the Cb; they are necessary and sufficient to target both CsoS2 and foreign proteins to the Cb. The N-terminal repeats of this protein bind simultaneously to both subunits of RuBisCO. Probably also interacts with the major shell proteins (CsoS1); that interaction would increase the local concentration of CsoS2 so that it can condense RuBisCO and full carboxysomes can be formed. The polypeptide is Carboxysome assembly protein CsoS2 (Prochlorococcus marinus (strain MIT 9313)).